The following is a 485-amino-acid chain: Membrane-bound lytic murein transglycosylase F (485 aa).

Positions 1–29 are cleaved as a signal peptide; sequence MFAHTALRQRCAKWLFATGLFLLLGACVE. The interval 30–267 is non-LT domain; the sequence is KPSTLERVKE…RLKDRYYGHV (238 aa). The interval 268-485 is LT domain; the sequence is DVLGYVGAYT…DKPAEQSPPM (218 aa). Glu-314 is an active-site residue. The tract at residues 465-485 is disordered; that stretch reads EGNLHVPGVNKDKPAEQSPPM.

In the N-terminal section; belongs to the bacterial solute-binding protein 3 family. The protein in the C-terminal section; belongs to the transglycosylase Slt family.

Its subcellular location is the cell outer membrane. It carries out the reaction Exolytic cleavage of the (1-&gt;4)-beta-glycosidic linkage between N-acetylmuramic acid (MurNAc) and N-acetylglucosamine (GlcNAc) residues in peptidoglycan, from either the reducing or the non-reducing ends of the peptidoglycan chains, with concomitant formation of a 1,6-anhydrobond in the MurNAc residue.. Functionally, murein-degrading enzyme that degrades murein glycan strands and insoluble, high-molecular weight murein sacculi, with the concomitant formation of a 1,6-anhydromuramoyl product. Lytic transglycosylases (LTs) play an integral role in the metabolism of the peptidoglycan (PG) sacculus. Their lytic action creates space within the PG sacculus to allow for its expansion as well as for the insertion of various structures such as secretion systems and flagella. The polypeptide is Membrane-bound lytic murein transglycosylase F (Pseudomonas putida (strain W619)).